The sequence spans 66 residues: DNA-directed RNA polymerase subunit omega (66 aa).

This sequence belongs to the RNA polymerase subunit omega family. The RNAP catalytic core consists of 2 alpha, 1 beta, 1 beta' and 1 omega subunit. When a sigma factor is associated with the core the holoenzyme is formed, which can initiate transcription.

The enzyme catalyses RNA(n) + a ribonucleoside 5'-triphosphate = RNA(n+1) + diphosphate. Functionally, promotes RNA polymerase assembly. Latches the N- and C-terminal regions of the beta' subunit thereby facilitating its interaction with the beta and alpha subunits. The polypeptide is DNA-directed RNA polymerase subunit omega (Clostridium botulinum (strain Alaska E43 / Type E3)).